A 98-amino-acid chain; its full sequence is NADH-ubiquinone oxidoreductase chain 4L (98 aa).

3 consecutive transmembrane segments (helical) span residues 1 to 21 (MSLV…GLLM), 29 to 49 (ALLC…LTIL), and 61 to 81 (IILL…LIMI).

This sequence belongs to the complex I subunit 4L family. Core subunit of respiratory chain NADH dehydrogenase (Complex I) which is composed of 45 different subunits.

It localises to the mitochondrion inner membrane. The enzyme catalyses a ubiquinone + NADH + 5 H(+)(in) = a ubiquinol + NAD(+) + 4 H(+)(out). Its function is as follows. Core subunit of the mitochondrial membrane respiratory chain NADH dehydrogenase (Complex I) which catalyzes electron transfer from NADH through the respiratory chain, using ubiquinone as an electron acceptor. Part of the enzyme membrane arm which is embedded in the lipid bilayer and involved in proton translocation. The polypeptide is NADH-ubiquinone oxidoreductase chain 4L (MT-ND4L) (Monodon monoceros (Narwhal)).